Reading from the N-terminus, the 525-residue chain is GMP synthase [glutamine-hydrolyzing] (525 aa).

Residues 9–202 (SILIIDFGSQ…VHKIVGLKSD (194 aa)) form the Glutamine amidotransferase type-1 domain. Cys-86 (nucleophile) is an active-site residue. Residues His-176 and Glu-178 contribute to the active site. The region spanning 203 to 400 (WTMAAYRAEM…LGLPESFIGR (198 aa)) is the GMPS ATP-PPase domain. 230-236 (SGGVDSS) is an ATP binding site.

In terms of assembly, homodimer.

It carries out the reaction XMP + L-glutamine + ATP + H2O = GMP + L-glutamate + AMP + diphosphate + 2 H(+). Its pathway is purine metabolism; GMP biosynthesis; GMP from XMP (L-Gln route): step 1/1. Functionally, catalyzes the synthesis of GMP from XMP. This chain is GMP synthase [glutamine-hydrolyzing], found in Agrobacterium fabrum (strain C58 / ATCC 33970) (Agrobacterium tumefaciens (strain C58)).